The sequence spans 125 residues: Large ribosomal subunit protein bL12 (125 aa).

It belongs to the bacterial ribosomal protein bL12 family. In terms of assembly, homodimer. Part of the ribosomal stalk of the 50S ribosomal subunit. Forms a multimeric L10(L12)X complex, where L10 forms an elongated spine to which 2 to 4 L12 dimers bind in a sequential fashion. Binds GTP-bound translation factors.

Functionally, forms part of the ribosomal stalk which helps the ribosome interact with GTP-bound translation factors. Is thus essential for accurate translation. The protein is Large ribosomal subunit protein bL12 of Helicobacter acinonychis (strain Sheeba).